A 241-amino-acid polypeptide reads, in one-letter code: GLIPR1-like protein 1 (241 aa).

A signal peptide spans 1 to 22; it reads MILRKKLSYLWTLGLCLVASKS. The SCP domain occupies 39–172; it reads LRLHNEARTN…PDSALLVCNY (134 aa). A lipid anchor (GPI-anchor amidated serine) is attached at Ser-220. Positions 221 to 241 are cleaved as a propeptide — removed in mature form; that stretch reads GTRQLIACNPLYLISVLLTIF.

This sequence belongs to the CRISP family. Part of a oolemmal binding multimeric complex (IZUMO1 complex) composed at least of IZUMO1 and GLIPR1L1; the complex assemblage is influenced by the maturation status of the male germ cell. Interacts with IZUMO1. In terms of processing, N-glycosylated. N-glycosylation decreases during the transit in the caput. Highly expressed in testis, where it localizes to round and elongating spermatids and differentiated spermatozoa in the seminiferous tubules and epididymis (at protein level).

It is found in the cytoplasmic vesicle. The protein localises to the secretory vesicle. The protein resides in the acrosome. It localises to the cell membrane. Its subcellular location is the membrane raft. Its function is as follows. Required for optimal fertilization at the stage of sperm-oocyte fusion, plays a role in optimizing acrosome function, the translocation of IZUMO1 during the acrosome reaction and the fertilization process. Component of epididymosomes, one type of membranous microvesicules which mediate the transfer of lipids and proteins to spermatozoa plasma membrane during epididymal maturation. Also a component of the CD9-positive microvesicules found in the cauda region. This is GLIPR1-like protein 1 from Bos taurus (Bovine).